The chain runs to 345 residues: Photosystem II protein D1 (345 aa).

Transmembrane regions (helical) follow at residues 30–47 (YVGWFGVLMIPTLLTAAT), 119–134 (HFFIGICSYMGREWEL), and 143–157 (WIAVAYSAPVAAASA). Position 119 (His119) interacts with chlorophyll a. Position 127 (Tyr127) interacts with pheophytin a. Asp171 and Glu190 together coordinate [CaMn4O5] cluster. A helical transmembrane segment spans residues 198 to 219 (FHMLGVAGVFGGSLFSAMHGSL). His199 lines the chlorophyll a pocket. A quinone is bound by residues His216 and 265-266 (SF). Residue His216 coordinates Fe cation. A Fe cation-binding site is contributed by His273. A helical membrane pass occupies residues 275-289 (FLAVWPVVGIWFTAL). [CaMn4O5] cluster is bound by residues His333, Glu334, Asp343, and Ala345.

Belongs to the reaction center PufL/M/PsbA/D family. As to quaternary structure, PSII is composed of 1 copy each of membrane proteins PsbA, PsbB, PsbC, PsbD, PsbE, PsbF, PsbH, PsbI, PsbJ, PsbK, PsbL, PsbM, PsbT, PsbY, PsbZ, Psb30/Ycf12, at least 3 peripheral proteins of the oxygen-evolving complex and a large number of cofactors. It forms dimeric complexes. The D1/D2 heterodimer binds P680, chlorophylls that are the primary electron donor of PSII, and subsequent electron acceptors. It shares a non-heme iron and each subunit binds pheophytin, quinone, additional chlorophylls, carotenoids and lipids. D1 provides most of the ligands for the Mn4-Ca-O5 cluster of the oxygen-evolving complex (OEC). There is also a Cl(-1) ion associated with D1 and D2, which is required for oxygen evolution. The PSII complex binds additional chlorophylls, carotenoids and specific lipids. serves as cofactor. Post-translationally, tyr-162 forms a radical intermediate that is referred to as redox-active TyrZ, YZ or Y-Z.

It is found in the plastid. The protein resides in the chloroplast thylakoid membrane. It catalyses the reaction 2 a plastoquinone + 4 hnu + 2 H2O = 2 a plastoquinol + O2. In terms of biological role, photosystem II (PSII) is a light-driven water:plastoquinone oxidoreductase that uses light energy to abstract electrons from H(2)O, generating O(2) and a proton gradient subsequently used for ATP formation. It consists of a core antenna complex that captures photons, and an electron transfer chain that converts photonic excitation into a charge separation. The D1/D2 (PsbA/PsbD) reaction center heterodimer binds P680, the primary electron donor of PSII as well as several subsequent electron acceptors. The sequence is that of Photosystem II protein D1 from Euglena gracilis.